A 246-amino-acid chain; its full sequence is NAD(P)H-quinone oxidoreductase subunit K, organellar chromatophore (246 aa).

Residues Cys58, Cys59, Cys123, and Cys154 each contribute to the [4Fe-4S] cluster site.

This sequence belongs to the complex I 20 kDa subunit family. In terms of assembly, NDH-1 is composed of 14 different subunits. Subunits nuoB, C, D, E, F, and G constitute the peripheral sector of the complex. The cofactor is [4Fe-4S] cluster.

It localises to the plastid. Its subcellular location is the organellar chromatophore thylakoid membrane. It carries out the reaction a quinone + NADH + H(+) = a quinol + NAD(+). Its function is as follows. NDH-1 shuttles electrons from NADH, via FMN and iron-sulfur (Fe-S) centers, to quinones in the respiratory chain. Couples the redox reaction to proton translocation (for every two electrons transferred, four hydrogen ions are translocated across the cytoplasmic membrane), and thus conserves the redox energy in a proton gradient. The chain is NAD(P)H-quinone oxidoreductase subunit K, organellar chromatophore from Paulinella chromatophora.